Reading from the N-terminus, the 147-residue chain is MTTATIDSSSGNGPLVSTTEQLQGLIESFIELGVLVHDNQGTQQSHTALTHKTNQVISQLSSLTDSGFTHQYPIPVDVISYIEDGRNPDVYTREFVEVTAKSNARLKGKMLGFQKLRDVLGDKLGKEFPELGSAIEDIKKRTTPDEE.

This sequence belongs to the Mediator complex subunit 10 family. As to quaternary structure, component of the Mediator complex.

Its subcellular location is the nucleus. In terms of biological role, component of the Mediator complex, a coactivator involved in the regulated transcription of nearly all RNA polymerase II-dependent genes. Mediator functions as a bridge to convey information from gene-specific regulatory proteins to the basal RNA polymerase II transcription machinery. Mediator is recruited to promoters by direct interactions with regulatory proteins and serves as a scaffold for the assembly of a functional preinitiation complex with RNA polymerase II and the general transcription factors. This chain is Mediator of RNA polymerase II transcription subunit 10 (NUT2), found in Debaryomyces hansenii (strain ATCC 36239 / CBS 767 / BCRC 21394 / JCM 1990 / NBRC 0083 / IGC 2968) (Yeast).